Consider the following 182-residue polypeptide: Coiled-coil domain-containing protein 32 (182 aa).

Positions 1-10 (MMIDDFETHA) are enriched in basic and acidic residues. Disordered stretches follow at residues 1 to 61 (MMID…FSPW) and 153 to 182 (PTQN…SPEK). Positions 153–167 (PTQNSETPASSSQTD) are enriched in polar residues. Over residues 172-182 (EEEEECPSPEK) the composition is skewed to acidic residues.

As to quaternary structure, associates with adaptor protein complex 2 (AP-2).

The protein localises to the membrane. It is found in the coated pit. Its function is as follows. Regulates clathrin-mediated endocytsois of cargos such as transferrin probably through the association and modulation of adaptor protein complex 2 (AP-2). Has a role in ciliogenesis and is required for proper cephalic and left/right axis development. The polypeptide is Coiled-coil domain-containing protein 32 (Danio rerio (Zebrafish)).